Consider the following 337-residue polypeptide: uncharacterized protein (337 aa).

Belongs to the NAD(P)-dependent epimerase/dehydratase family.

This is an uncharacterized protein from Escherichia coli (strain K12).